A 128-amino-acid chain; its full sequence is Holo-[acyl-carrier-protein] synthase (128 aa).

Residues Asp-8 and Glu-58 each contribute to the Mg(2+) site.

It belongs to the P-Pant transferase superfamily. AcpS family. The cofactor is Mg(2+).

The protein localises to the cytoplasm. The catalysed reaction is apo-[ACP] + CoA = holo-[ACP] + adenosine 3',5'-bisphosphate + H(+). In terms of biological role, transfers the 4'-phosphopantetheine moiety from coenzyme A to a Ser of acyl-carrier-protein. This Exiguobacterium sibiricum (strain DSM 17290 / CCUG 55495 / CIP 109462 / JCM 13490 / 255-15) protein is Holo-[acyl-carrier-protein] synthase.